Consider the following 548-residue polypeptide: Acetolactate synthase isozyme 2 large subunit (548 aa).

Glu47 is a thiamine diphosphate binding site. FAD contacts are provided by residues Arg149, 251–272, and 294–313; these read HGTK…VGAR and DIDP…LQGD. The segment at 377-457 is thiamine pyrophosphate binding; the sequence is QHQMWAAQHI…LKIVLLDNQR (81 aa). 2 residues coordinate Mg(2+): Asp428 and Asn455.

The protein belongs to the TPP enzyme family. In terms of assembly, tetramer of two large (IlvG) and two small (IlvM) chains. FAD serves as cofactor. Mg(2+) is required as a cofactor. It depends on thiamine diphosphate as a cofactor.

The enzyme catalyses 2 pyruvate + H(+) = (2S)-2-acetolactate + CO2. Its pathway is amino-acid biosynthesis; L-isoleucine biosynthesis; L-isoleucine from 2-oxobutanoate: step 1/4. It functions in the pathway amino-acid biosynthesis; L-valine biosynthesis; L-valine from pyruvate: step 1/4. Its activity is regulated as follows. Inhibited by the herbicides chlorimuron ethyl, chlorsulfuron and imazapyr. Functionally, catalyzes the first step in the biosynthesis of branched-chain amino acids. This Escherichia coli (strain K12) protein is Acetolactate synthase isozyme 2 large subunit (ilvG).